Here is a 419-residue protein sequence, read N- to C-terminus: Esterase FrsA (419 aa).

It belongs to the FrsA family.

It catalyses the reaction a carboxylic ester + H2O = an alcohol + a carboxylate + H(+). In terms of biological role, catalyzes the hydrolysis of esters. The chain is Esterase FrsA from Photobacterium profundum (strain SS9).